A 159-amino-acid chain; its full sequence is Small ribosomal subunit protein uS7 (159 aa).

It belongs to the universal ribosomal protein uS7 family. In terms of assembly, part of the 30S ribosomal subunit. Contacts proteins S9 and S11.

One of the primary rRNA binding proteins, it binds directly to 16S rRNA where it nucleates assembly of the head domain of the 30S subunit. Is located at the subunit interface close to the decoding center, probably blocks exit of the E-site tRNA. The sequence is that of Small ribosomal subunit protein uS7 from Endomicrobium trichonymphae.